A 213-amino-acid polypeptide reads, in one-letter code: Deoxyribose-phosphate aldolase (213 aa).

The Proton donor/acceptor role is filled by D89. The Schiff-base intermediate with acetaldehyde role is filled by K151. Residue K180 is the Proton donor/acceptor of the active site.

The protein belongs to the DeoC/FbaB aldolase family. DeoC type 1 subfamily.

It is found in the cytoplasm. The catalysed reaction is 2-deoxy-D-ribose 5-phosphate = D-glyceraldehyde 3-phosphate + acetaldehyde. The protein operates within carbohydrate degradation; 2-deoxy-D-ribose 1-phosphate degradation; D-glyceraldehyde 3-phosphate and acetaldehyde from 2-deoxy-alpha-D-ribose 1-phosphate: step 2/2. Its function is as follows. Catalyzes a reversible aldol reaction between acetaldehyde and D-glyceraldehyde 3-phosphate to generate 2-deoxy-D-ribose 5-phosphate. This Finegoldia magna (strain ATCC 29328 / DSM 20472 / WAL 2508) (Peptostreptococcus magnus) protein is Deoxyribose-phosphate aldolase.